A 487-amino-acid chain; its full sequence is METVQLRNPPRRQLKKLDEDSLTKQPEEVFDVLEKLGEGSYGSVYKAIHKETGQIVAIKQVPVESDLQEIIKEISIMQQCDSPHVVKYYGSYFKNTDLWIVMEYCGAGSVSDIIRLRNKTLTEDEIATILQSTLKGLEYLHFMRKIHRDIKAGNILLNTEGQAKLADFGVAGQLTDTMAKRNTVIGTPFWMAPEVIQEIGYNCVADIWSLGITAIEMAEGKPPYADIHPMRAIFMIPTNPPPTFRKPELWSDNFTDFVKQCLVKSPEQRATATQLLQHPFVKSAKGVSILRDLINEAMDVKLKRQESQQREVDQDDEENSEEDEMDSGTMVRAVGDEMGTVRVASTMTDGANTMIEHDDTLPSQLGTMVINTEDEEEEGTMKRRDETMQPAKPSFLEYFEQKEKENQINSFGKSVPGPLKNSSDWKIPQDGDYEFLKSWTVEDLQKRLLALDPMMEQEIEEIRQKYQSKRQPILDAIEAKKRRQQNF.

At M1 the chain carries N-acetylmethionine. Position 3 is a phosphothreonine (T3). The region spanning 30–281 (FDVLEKLGEG…ATQLLQHPFV (252 aa)) is the Protein kinase domain. ATP is bound by residues 36 to 44 (LGEGSYGSV) and K59. D149 (proton acceptor) is an active-site residue. Phosphothreonine; by autocatalysis is present on T183. Position 265 is a phosphoserine (S265). Residues 290-310 (LRDLINEAMDVKLKRQESQQR) are a coiled coil. The span at 303–312 (KRQESQQREV) shows a compositional bias: basic and acidic residues. The disordered stretch occupies residues 303 to 332 (KRQESQQREVDQDDEENSEEDEMDSGTMVR). Positions 313–326 (DQDDEENSEEDEMD) are enriched in acidic residues. S320 is modified (phosphoserine). T340 and T367 each carry phosphothreonine. T387 is modified (phosphothreonine; by PKB/AKT1). Residues S410 and S414 each carry the phosphoserine modification. Position 433 is a phosphotyrosine (Y433). Residues 433 to 480 (YEFLKSWTVEDLQKRLLALDPMMEQEIEEIRQKYQSKRQPILDAIEAK) enclose the SARAH domain.

The protein belongs to the protein kinase superfamily. STE Ser/Thr protein kinase family. STE20 subfamily. As to quaternary structure, homodimer; mediated via the coiled-coil region. Interacts with NORE1, which inhibits autoactivation. Interacts with and stabilizes SAV1. Interacts with RASSF1. Interacts with FOXO3. Interacts with RASSF2 (via SARAH domain). Interacts with AR, PKB/AKT1, TNNI3 and SIRT1. Interacts with DLG5 (via PDZ domain 3). Interacts with MARK3 and SCRIB in the presence of DLG5. The cofactor is Mg(2+). In terms of processing, autophosphorylated on serine and threonine residues. Phosphorylation at Thr-387 by PKB/AKT1, leads to inhibition of its: kinase activity, nuclear translocation and autophosphorylation at Thr-183. It also diminishes its cleavage by caspases and its ability to phosphorylate FOXO3. Proteolytically cleaved by caspase-3 during apoptosis at Asp-326 and Asp-349 resulting in a 37 kDa or a 39 kDa subunit respectively. The 39 kDa subunit is further cleaved into the 37 kDa form. Proteolytic cleavage results in kinase activation and nuclear translocation of the truncated form (MST1/N). It is less likely that cleavage at Asp-349 is a prerequisite for activation as this site is not conserved in the murine ortholog.

The protein localises to the cytoplasm. It localises to the nucleus. It carries out the reaction L-seryl-[protein] + ATP = O-phospho-L-seryl-[protein] + ADP + H(+). The enzyme catalyses L-threonyl-[protein] + ATP = O-phospho-L-threonyl-[protein] + ADP + H(+). Inhibited by the C-terminal non-catalytic region. Activated by caspase-cleavage. Full activation also requires homodimerization and autophosphorylation of Thr-183. Activated by RASSF1 which acts by preventing its dephosphorylation. Its function is as follows. Stress-activated, pro-apoptotic kinase which, following caspase-cleavage, enters the nucleus and induces chromatin condensation followed by internucleosomal DNA fragmentation. Key component of the Hippo signaling pathway which plays a pivotal role in organ size control and tumor suppression by restricting proliferation and promoting apoptosis. The core of this pathway is composed of a kinase cascade wherein STK3/MST2 and STK4/MST1, in complex with its regulatory protein SAV1, phosphorylates and activates LATS1/2 in complex with its regulatory protein MOB1, which in turn phosphorylates and inactivates YAP1 oncoprotein and WWTR1/TAZ. Phosphorylation of YAP1 by LATS2 inhibits its translocation into the nucleus to regulate cellular genes important for cell proliferation, cell death, and cell migration. STK3/MST2 and STK4/MST1 are required to repress proliferation of mature hepatocytes, to prevent activation of facultative adult liver stem cells (oval cells), and to inhibit tumor formation. Phosphorylates 'Ser-14' of histone H2B (H2BS14ph) during apoptosis. Phosphorylates FOXO3 upon oxidative stress, which results in its nuclear translocation and cell death initiation. Phosphorylates MOBKL1A, MOBKL1B and RASSF2. Phosphorylates TNNI3 (cardiac Tn-I) and alters its binding affinity to TNNC1 (cardiac Tn-C) and TNNT2 (cardiac Tn-T). Phosphorylates FOXO1 on 'Ser-212' and regulates its activation and stimulates transcription of PMAIP1 in a FOXO1-dependent manner. Phosphorylates SIRT1 and inhibits SIRT1-mediated p53/TP53 deacetylation, thereby promoting p53/TP53 dependent transcription and apoptosis upon DNA damage. Acts as an inhibitor of PKB/AKT1. Phosphorylates AR on 'Ser-650' and suppresses its activity by intersecting with PKB/AKT1 signaling and antagonizing formation of AR-chromatin complexes. The chain is Serine/threonine-protein kinase 4 (STK4) from Papio anubis (Olive baboon).